A 233-amino-acid chain; its full sequence is Octanoyltransferase (233 aa).

The BPL/LPL catalytic domain occupies 32-213 (NNIDGILLLL…NFKMIFETDL (182 aa)). Residues 77 to 84 (RGGNVTYH), 144 to 146 (AIG), and 157 to 159 (GFA) contribute to the substrate site. Catalysis depends on Cys175, which acts as the Acyl-thioester intermediate.

Belongs to the LipB family.

It is found in the cytoplasm. It carries out the reaction octanoyl-[ACP] + L-lysyl-[protein] = N(6)-octanoyl-L-lysyl-[protein] + holo-[ACP] + H(+). Its pathway is protein modification; protein lipoylation via endogenous pathway; protein N(6)-(lipoyl)lysine from octanoyl-[acyl-carrier-protein]: step 1/2. Its function is as follows. Catalyzes the transfer of endogenously produced octanoic acid from octanoyl-acyl-carrier-protein onto the lipoyl domains of lipoate-dependent enzymes. Lipoyl-ACP can also act as a substrate although octanoyl-ACP is likely to be the physiological substrate. The protein is Octanoyltransferase of Clostridium kluyveri (strain ATCC 8527 / DSM 555 / NBRC 12016 / NCIMB 10680 / K1).